A 232-amino-acid polypeptide reads, in one-letter code: Phosphoribosylformylglycinamidine synthase subunit PurQ (232 aa).

The Glutamine amidotransferase type-1 domain occupies 2-232; the sequence is RIGVITFPGS…SVVRSTLVEA (231 aa). The active-site Nucleophile is cysteine 85. Catalysis depends on residues histidine 194 and glutamate 196.

As to quaternary structure, part of the FGAM synthase complex composed of 1 PurL, 1 PurQ and 2 PurS subunits.

The protein resides in the cytoplasm. The catalysed reaction is N(2)-formyl-N(1)-(5-phospho-beta-D-ribosyl)glycinamide + L-glutamine + ATP + H2O = 2-formamido-N(1)-(5-O-phospho-beta-D-ribosyl)acetamidine + L-glutamate + ADP + phosphate + H(+). The enzyme catalyses L-glutamine + H2O = L-glutamate + NH4(+). It functions in the pathway purine metabolism; IMP biosynthesis via de novo pathway; 5-amino-1-(5-phospho-D-ribosyl)imidazole from N(2)-formyl-N(1)-(5-phospho-D-ribosyl)glycinamide: step 1/2. Its function is as follows. Part of the phosphoribosylformylglycinamidine synthase complex involved in the purines biosynthetic pathway. Catalyzes the ATP-dependent conversion of formylglycinamide ribonucleotide (FGAR) and glutamine to yield formylglycinamidine ribonucleotide (FGAM) and glutamate. The FGAM synthase complex is composed of three subunits. PurQ produces an ammonia molecule by converting glutamine to glutamate. PurL transfers the ammonia molecule to FGAR to form FGAM in an ATP-dependent manner. PurS interacts with PurQ and PurL and is thought to assist in the transfer of the ammonia molecule from PurQ to PurL. The chain is Phosphoribosylformylglycinamidine synthase subunit PurQ from Leifsonia xyli subsp. xyli (strain CTCB07).